Reading from the N-terminus, the 417-residue chain is Histidine--tRNA ligase (417 aa).

This sequence belongs to the class-II aminoacyl-tRNA synthetase family.

The protein localises to the cytoplasm. It carries out the reaction tRNA(His) + L-histidine + ATP = L-histidyl-tRNA(His) + AMP + diphosphate + H(+). The protein is Histidine--tRNA ligase of Pyrobaculum neutrophilum (strain DSM 2338 / JCM 9278 / NBRC 100436 / V24Sta) (Thermoproteus neutrophilus).